The chain runs to 255 residues: ATP synthase subunit a (255 aa).

Positions 1 to 7 (MMFNNII) are cleaved as a propeptide — removed in mature form. Helical transmembrane passes span 35 to 55 (FGFYIIISTIIILTLHLLITY), 91 to 111 (YFPFIYGLFIFILMNNLLGLI), 120 to 140 (HFILTFFISFTVVLGATILGF), 147 to 167 (FFSLFVPSGCPLGLLPLLVLI), 177 to 197 (VSLGLRLSANILSGHMLLVIL), and 208 to 228 (GIFYFLIGLIPLAFIFAFSGL).

Belongs to the ATPase A chain family. In terms of assembly, F-type ATPases have 2 components, CF(1) - the catalytic core - and CF(0) - the membrane proton channel. CF(1) has five subunits: alpha(3), beta(3), gamma(1), delta(1), epsilon(1). CF(0) has three main subunits: a, b and c.

It is found in the mitochondrion inner membrane. Mitochondrial membrane ATP synthase (F(1)F(0) ATP synthase or Complex V) produces ATP from ADP in the presence of a proton gradient across the membrane which is generated by electron transport complexes of the respiratory chain. F-type ATPases consist of two structural domains, F(1) - containing the extramembraneous catalytic core and F(0) - containing the membrane proton channel, linked together by a central stalk and a peripheral stalk. During catalysis, ATP synthesis in the catalytic domain of F(1) is coupled via a rotary mechanism of the central stalk subunits to proton translocation. Key component of the proton channel; it may play a direct role in the translocation of protons across the membrane. This chain is ATP synthase subunit a (ATP6), found in Trichophyton rubrum (Athlete's foot fungus).